Reading from the N-terminus, the 512-residue chain is MDFVLSALQRDSWGIAAIILVSIWALHSFHRSRKLQIPVPYVGKCGILGPWISALQWESKARELVQEGYEKHGNFAFKVALLNRWEVCICNEDMIREYKNLMDNQFSAIAVTSELFQIKWTAPGTEEGAHKISIPLLGKALTWQRNRSAAQNDPYFSEFVEEFLYAWKEEVPVPENGDYELPCFETGARVVAHLTARSLVGYPLCRNPEIVNLFTDYGSAVPTSGFFIAMFPEIMKPFVANFCSAPRISKRLQAILLEEFAKRREEGGIESTDIMGWLRNWTDQNEPGVYGDLEITSSIIATIFGAIHTTTQVLVHCLFELATRPEYVEPLRVEIQSALEEHGGWVKEGIEGMVKLDSFIKECQRFNPLDAGSLARRATKDFTFKNGLTIPEGTFVFAPNGPILFDDTLYPEARQFDGYRFYNLGQKTGKPQDFRFAATNQKYLQFGDGRHTCPGRWMASDEIRLMLAHILMNYDIATKDNKGRPENWIFKKILFPDMKAVVILKARKSVSA.

2 consecutive transmembrane segments (helical) span residues 3 to 23 (FVLS…LVSI) and 35 to 55 (LQIP…ISAL). Position 453 (Cys-453) interacts with heme.

This sequence belongs to the cytochrome P450 family. Heme serves as cofactor.

The protein localises to the membrane. The protein operates within secondary metabolite biosynthesis. Functionally, cytochrome P450 monooxygenase; part of the gene cluster that mediates the biosynthesis of paxilline, a mycotoxin that acts as an inhibitor of mammalian maxi-K channels. PaxG, the geranylgeranyl diphosphate (GGPP) synthase is proposed to catalyze the first step in paxilline biosynthesis. Condensation of indole-3-glycerol phosphate with GGPP by paxC then forms 3-geranylgeranylindole (3-GGI), followed by epoxidation and cyclization of this intermediate (by paxM and paxB) to form paspaline. Paspaline is subsequently converted to 13-desoxypaxilline by paxP, the latter being then converted to paxilline by paxQ. Finally paxilline can be mono- and di-prenylated by paxD. PaxQ can also utilized beta-paxitriol and alpha-PC-M6 as substrates converting them to alpha-paxitriol. In Penicillium paxilli, this protein is Cytochrome P450 monooxygenase paxQ.